The primary structure comprises 502 residues: RNA-splicing ligase RtcB homolog 2 (502 aa).

Residues Asp120, Cys123, His228, His260, and His354 each contribute to the Mn(2+) site. Asn227–Glu231 provides a ligand contact to GMP. GMP is bound by residues His354 to Asn355, Gly403 to Met406, Ser410, and His429 to Gly432. Residue His429 is the GMP-histidine intermediate of the active site.

This sequence belongs to the RtcB family. In terms of assembly, catalytic component of the tRNA-splicing ligase complex. Mn(2+) serves as cofactor.

It catalyses the reaction a 3'-end 3'-phospho-ribonucleotide-RNA + a 5'-end dephospho-ribonucleoside-RNA + GTP = a ribonucleotidyl-ribonucleotide-RNA + GMP + diphosphate. It carries out the reaction a 3'-end 2',3'-cyclophospho-ribonucleotide-RNA + a 5'-end dephospho-ribonucleoside-RNA + GTP + H2O = a ribonucleotidyl-ribonucleotide-RNA + GMP + diphosphate + H(+). Catalytic subunit of the tRNA-splicing ligase complex that acts by directly joining spliced tRNA halves to mature-sized tRNAs by incorporating the precursor-derived splice junction phosphate into the mature tRNA as a canonical 3',5'-phosphodiester. May act as an RNA ligase with broad substrate specificity, and may function toward other RNAs. The protein is RNA-splicing ligase RtcB homolog 2 of Culex quinquefasciatus (Southern house mosquito).